The primary structure comprises 440 residues: 2-methylisoborneol synthase (440 aa).

Positions 1-116 (MPDSGPLGPH…SPAPAEPAAG (116 aa)) are disordered. Low complexity predominate over residues 17-27 (TPATTVPDAPA). Residues 48-58 (PPVPIPSPSPP) are compositionally biased toward pro residues. Low complexity predominate over residues 59 to 75 (SGSASAAADTPDATTVG). Over residues 102-111 (PSLPGSPAPA) the composition is skewed to pro residues. Mg(2+)-binding residues include Asp197, Asp198, Glu202, Asn345, Ser349, and Glu353.

It belongs to the terpene synthase family. 2-methylisoborneol synthase subfamily. Requires Mg(2+) as cofactor.

It catalyses the reaction (E)-2-methylgeranyl diphosphate + H2O = 2-methylisoborneol + diphosphate. Catalyzes the cyclization of 2-methylgeranyl diphosphate (2-MeGPP) to 2-methylisoborneol (2-MIB), which likely involves the intermediacy of 2-methyllinalyl diphosphate. The chain is 2-methylisoborneol synthase from Streptomyces ambofaciens (strain ATCC 23877 / 3486 / DSM 40053 / JCM 4204 / NBRC 12836 / NRRL B-2516).